A 131-amino-acid polypeptide reads, in one-letter code: Holo-[acyl-carrier-protein] synthase (131 aa).

Residues D8 and E59 each contribute to the Mg(2+) site.

This sequence belongs to the P-Pant transferase superfamily. AcpS family. It depends on Mg(2+) as a cofactor.

It is found in the cytoplasm. The catalysed reaction is apo-[ACP] + CoA = holo-[ACP] + adenosine 3',5'-bisphosphate + H(+). Functionally, transfers the 4'-phosphopantetheine moiety from coenzyme A to a Ser of acyl-carrier-protein. The chain is Holo-[acyl-carrier-protein] synthase from Paramagnetospirillum magneticum (strain ATCC 700264 / AMB-1) (Magnetospirillum magneticum).